Reading from the N-terminus, the 420-residue chain is Melatonin receptor type 1C (420 aa).

The Extracellular portion of the chain corresponds to 1-34; it reads MMEVNSTCLDCRTPGTIRTEQDAQDSASQGLTSA. A glycan (N-linked (GlcNAc...) asparagine) is linked at Asn5. The chain crosses the membrane as a helical span at residues 35–55; that stretch reads LAVVLIFTIVVDVLGNILVIL. Topologically, residues 56–73 are cytoplasmic; the sequence is SVLRNKKLQNAGNLFVVS. A helical transmembrane segment spans residues 74–94; the sequence is LSIADLVVAVYPYPVILIAIF. At 95-106 the chain is on the extracellular side; the sequence is QNGWTLGNIHCQ. A disulfide bridge links Cys105 with Cys182. The chain crosses the membrane as a helical span at residues 107-127; that stretch reads ISGFLMGLSVIGSVFNITAIA. Residues 128–152 lie on the Cytoplasmic side of the membrane; it reads INRYCYICHSLRYDKLYNQRSTWCY. A helical transmembrane segment spans residues 153–173; that stretch reads LGLTWILTIIAIVPNFFVGSL. The Extracellular segment spans residues 174-192; sequence QYDPRIFSCTFAQTVSSSY. A helical transmembrane segment spans residues 193-213; that stretch reads TITVVVVHFIVPLSVVTFCYL. Over 214–245 the chain is Cytoplasmic; sequence RIWVLVIQVKHRVRQDFKQKLTQTDLRNFLTM. Residues 246-266 form a helical membrane-spanning segment; sequence FVVFVLFAVCWAPLNFIGLAV. The Extracellular segment spans residues 267-279; it reads AINPFHVAPKIPE. The chain crosses the membrane as a helical span at residues 280 to 303; that stretch reads WLFVLSYFMAYFNSCLNAVIYGVL. Over 304–420 the chain is Cytoplasmic; it reads NQNFRKEYKR…ELCKDGISQR (117 aa).

The protein belongs to the G-protein coupled receptor 1 family. In terms of tissue distribution, moderately expressed in dermal melanophores.

Its subcellular location is the cell membrane. In terms of biological role, high affinity receptor for melatonin. Likely to mediate the potent effects of melatonin on pigment aggregation in melanophores. The activity of this receptor is mediated by pertussis toxin sensitive G proteins that inhibit adenylate cyclase activity. The polypeptide is Melatonin receptor type 1C (mtnr1c) (Xenopus laevis (African clawed frog)).